The chain runs to 241 residues: Oil body-associated protein 1B (241 aa).

The segment covering 1 to 12 (MEKAVHSSTTSG) has biased composition (polar residues). A disordered region spans residues 1–22 (MEKAVHSSTTSGPAVPGETTKT).

It belongs to the OBAP family.

The chain is Oil body-associated protein 1B from Arabidopsis thaliana (Mouse-ear cress).